Consider the following 493-residue polypeptide: Ketol-acid reductoisomerase (NADP(+)) (493 aa).

The region spanning 14-208 (LDQLGRCRFM…GGDRAGVLES (195 aa)) is the KARI N-terminal Rossmann domain. NADP(+) is bound by residues 45 to 48 (CGAQ), Arg68, Arg76, Ser78, and 108 to 110 (DKQ). His132 is a catalytic residue. Gly158 provides a ligand contact to NADP(+). KARI C-terminal knotted domains follow at residues 209–345 (SFVA…APKA) and 346–486 (DGIK…MTDM). Mg(2+) is bound by residues Asp217, Glu221, Glu390, and Glu394. Ser415 is a substrate binding site.

It belongs to the ketol-acid reductoisomerase family. Mg(2+) is required as a cofactor.

It catalyses the reaction (2R)-2,3-dihydroxy-3-methylbutanoate + NADP(+) = (2S)-2-acetolactate + NADPH + H(+). The catalysed reaction is (2R,3R)-2,3-dihydroxy-3-methylpentanoate + NADP(+) = (S)-2-ethyl-2-hydroxy-3-oxobutanoate + NADPH + H(+). The protein operates within amino-acid biosynthesis; L-isoleucine biosynthesis; L-isoleucine from 2-oxobutanoate: step 2/4. It participates in amino-acid biosynthesis; L-valine biosynthesis; L-valine from pyruvate: step 2/4. Involved in the biosynthesis of branched-chain amino acids (BCAA). Catalyzes an alkyl-migration followed by a ketol-acid reduction of (S)-2-acetolactate (S2AL) to yield (R)-2,3-dihydroxy-isovalerate. In the isomerase reaction, S2AL is rearranged via a Mg-dependent methyl migration to produce 3-hydroxy-3-methyl-2-ketobutyrate (HMKB). In the reductase reaction, this 2-ketoacid undergoes a metal-dependent reduction by NADPH to yield (R)-2,3-dihydroxy-isovalerate. In Actinobacillus succinogenes (strain ATCC 55618 / DSM 22257 / CCUG 43843 / 130Z), this protein is Ketol-acid reductoisomerase (NADP(+)).